A 337-amino-acid chain; its full sequence is Alcohol dehydrogenase (337 aa).

Zn(2+)-binding residues include C38, H61, C92, C95, C98, C106, and C148. Residues 172-177 (GIGGLG), D195, K200, 260-262 (VGL), and R331 each bind NAD(+).

This sequence belongs to the zinc-containing alcohol dehydrogenase family. Zn(2+) serves as cofactor.

The enzyme catalyses a primary alcohol + NAD(+) = an aldehyde + NADH + H(+). It catalyses the reaction a secondary alcohol + NAD(+) = a ketone + NADH + H(+). With respect to regulation, substrate inhibition is not observed with any alcohols, and the enzyme-NADH dissociation is not considered to be a rate-limiting step. NAD(+)-dependent alcohol dehydrogenase. This Geobacillus stearothermophilus (Bacillus stearothermophilus) protein is Alcohol dehydrogenase (adhT).